We begin with the raw amino-acid sequence, 435 residues long: tRNA(Ile)-lysidine synthase (435 aa).

Residue 25–30 (SGGLDS) coordinates ATP.

The protein belongs to the tRNA(Ile)-lysidine synthase family.

The protein localises to the cytoplasm. The catalysed reaction is cytidine(34) in tRNA(Ile2) + L-lysine + ATP = lysidine(34) in tRNA(Ile2) + AMP + diphosphate + H(+). In terms of biological role, ligates lysine onto the cytidine present at position 34 of the AUA codon-specific tRNA(Ile) that contains the anticodon CAU, in an ATP-dependent manner. Cytidine is converted to lysidine, thus changing the amino acid specificity of the tRNA from methionine to isoleucine. This is tRNA(Ile)-lysidine synthase from Photobacterium profundum (strain SS9).